Reading from the N-terminus, the 98-residue chain is NADH-ubiquinone oxidoreductase chain 4L (98 aa).

The next 3 helical transmembrane spans lie at 1–21 (MSLTYMNMLLAFMISLMGLLM), 29–49 (SLLCLEGMMLSLFVMMTVTIL), and 61–81 (IILLVFAACEAALGLSLLVMV).

This sequence belongs to the complex I subunit 4L family. As to quaternary structure, core subunit of respiratory chain NADH dehydrogenase (Complex I) which is composed of 45 different subunits.

It is found in the mitochondrion inner membrane. The enzyme catalyses a ubiquinone + NADH + 5 H(+)(in) = a ubiquinol + NAD(+) + 4 H(+)(out). Functionally, core subunit of the mitochondrial membrane respiratory chain NADH dehydrogenase (Complex I) which catalyzes electron transfer from NADH through the respiratory chain, using ubiquinone as an electron acceptor. Part of the enzyme membrane arm which is embedded in the lipid bilayer and involved in proton translocation. This chain is NADH-ubiquinone oxidoreductase chain 4L (MT-ND4L), found in Sturnira lilium (Lesser yellow-shouldered bat).